Consider the following 239-residue polypeptide: tRNA1(Val) (adenine(37)-N6)-methyltransferase (239 aa).

It belongs to the methyltransferase superfamily. tRNA (adenine-N(6)-)-methyltransferase family.

The protein localises to the cytoplasm. The catalysed reaction is adenosine(37) in tRNA1(Val) + S-adenosyl-L-methionine = N(6)-methyladenosine(37) in tRNA1(Val) + S-adenosyl-L-homocysteine + H(+). Its function is as follows. Specifically methylates the adenine in position 37 of tRNA(1)(Val) (anticodon cmo5UAC). This chain is tRNA1(Val) (adenine(37)-N6)-methyltransferase, found in Trichodesmium erythraeum (strain IMS101).